The chain runs to 156 residues: ATP synthase subunit b (156 aa).

The chain crosses the membrane as a helical span at residues 7 to 29; sequence LFAQMVVFLVLAWFTMKFVWPPL.

It belongs to the ATPase B chain family. As to quaternary structure, F-type ATPases have 2 components, F(1) - the catalytic core - and F(0) - the membrane proton channel. F(1) has five subunits: alpha(3), beta(3), gamma(1), delta(1), epsilon(1). F(0) has three main subunits: a(1), b(2) and c(10-14). The alpha and beta chains form an alternating ring which encloses part of the gamma chain. F(1) is attached to F(0) by a central stalk formed by the gamma and epsilon chains, while a peripheral stalk is formed by the delta and b chains.

The protein resides in the cell inner membrane. Functionally, f(1)F(0) ATP synthase produces ATP from ADP in the presence of a proton or sodium gradient. F-type ATPases consist of two structural domains, F(1) containing the extramembraneous catalytic core and F(0) containing the membrane proton channel, linked together by a central stalk and a peripheral stalk. During catalysis, ATP synthesis in the catalytic domain of F(1) is coupled via a rotary mechanism of the central stalk subunits to proton translocation. Its function is as follows. Component of the F(0) channel, it forms part of the peripheral stalk, linking F(1) to F(0). The chain is ATP synthase subunit b from Burkholderia ambifaria (strain MC40-6).